Here is a 286-residue protein sequence, read N- to C-terminus: 2-hydroxy-6-oxo-6-phenylhexa-2,4-dienoate hydrolase (286 aa).

Substrate contacts are provided by residues 42-43, N51, N111, S180, and R190; that span reads GG. H265 serves as the catalytic Proton acceptor. W266 provides a ligand contact to substrate.

It belongs to the AB hydrolase superfamily. BphD family. As to quaternary structure, homodimer.

It catalyses the reaction 2,6-dioxo-6-phenylhexa-3-enoate + H2O = 2-oxopent-4-enoate + benzoate + H(+). The protein operates within xenobiotic degradation; biphenyl degradation; 2-hydroxy-2,4-pentadienoate and benzoate from biphenyl: step 4/4. Functionally, catalyzes an unusual C-C bond hydrolysis of 2-hydroxy-6-oxo-6-phenylhexa-2,4-dienoic acid (HOPDA) to produce benzoic acid and 2-hydroxy-2,4-pentadienoic acid (HPD). The sequence is that of 2-hydroxy-6-oxo-6-phenylhexa-2,4-dienoate hydrolase (bphD) from Pseudomonas putida (Arthrobacter siderocapsulatus).